A 565-amino-acid chain; its full sequence is Proline--tRNA ligase (565 aa).

It belongs to the class-II aminoacyl-tRNA synthetase family. ProS type 1 subfamily. As to quaternary structure, homodimer.

It is found in the cytoplasm. It carries out the reaction tRNA(Pro) + L-proline + ATP = L-prolyl-tRNA(Pro) + AMP + diphosphate. In terms of biological role, catalyzes the attachment of proline to tRNA(Pro) in a two-step reaction: proline is first activated by ATP to form Pro-AMP and then transferred to the acceptor end of tRNA(Pro). As ProRS can inadvertently accommodate and process non-cognate amino acids such as alanine and cysteine, to avoid such errors it has two additional distinct editing activities against alanine. One activity is designated as 'pretransfer' editing and involves the tRNA(Pro)-independent hydrolysis of activated Ala-AMP. The other activity is designated 'posttransfer' editing and involves deacylation of mischarged Ala-tRNA(Pro). The misacylated Cys-tRNA(Pro) is not edited by ProRS. This chain is Proline--tRNA ligase, found in Francisella tularensis subsp. holarctica (strain FTNF002-00 / FTA).